The primary structure comprises 126 residues: Aspartate 1-decarboxylase (126 aa).

The Schiff-base intermediate with substrate; via pyruvic acid role is filled by Ser25. Position 25 is a pyruvic acid (Ser) (Ser25). Thr57 serves as a coordination point for substrate. The active-site Proton donor is the Tyr58. Residue 73-75 participates in substrate binding; it reads GAA.

It belongs to the PanD family. Heterooctamer of four alpha and four beta subunits. Requires pyruvate as cofactor. In terms of processing, is synthesized initially as an inactive proenzyme, which is activated by self-cleavage at a specific serine bond to produce a beta-subunit with a hydroxyl group at its C-terminus and an alpha-subunit with a pyruvoyl group at its N-terminus.

Its subcellular location is the cytoplasm. The catalysed reaction is L-aspartate + H(+) = beta-alanine + CO2. It participates in cofactor biosynthesis; (R)-pantothenate biosynthesis; beta-alanine from L-aspartate: step 1/1. In terms of biological role, catalyzes the pyruvoyl-dependent decarboxylation of aspartate to produce beta-alanine. This is Aspartate 1-decarboxylase from Chromohalobacter salexigens (strain ATCC BAA-138 / DSM 3043 / CIP 106854 / NCIMB 13768 / 1H11).